The following is a 76-amino-acid chain: Repressor protein of division inhibition gene dicB (76 aa).

The DNA-binding element occupies 13 to 33 (KTKLAQAAGIRLASLYSWKGD).

Its function is as follows. This protein is a repressor of division inhibition gene dicB. This is Repressor protein of division inhibition gene dicB (dicC) from Escherichia coli (strain K12).